Consider the following 137-residue polypeptide: Lysozyme (137 aa).

An N-terminal signal peptide occupies residues methionine 1–alanine 20. An I-type lysozyme domain is found at isoleucine 21 to serine 134. 6 cysteine pairs are disulfide-bonded: cysteine 25–cysteine 102, cysteine 30–cysteine 37, cysteine 42–cysteine 51, cysteine 64–cysteine 84, cysteine 74–cysteine 80, and cysteine 98–cysteine 116. Glutamate 33 acts as the Proton donor in catalysis. Aspartate 45 acts as the Nucleophile in catalysis. Residue lysine 57–aspartate 63 coordinates substrate. Residues tyrosine 88 and histidine 109–glycine 111 each bind substrate.

Belongs to the glycosyl hydrolase 22 family. Type-I lysozyme subfamily.

It is found in the secreted. It carries out the reaction Hydrolysis of (1-&gt;4)-beta-linkages between N-acetylmuramic acid and N-acetyl-D-glucosamine residues in a peptidoglycan and between N-acetyl-D-glucosamine residues in chitodextrins.. Has bacteriolytic activity. May play a role in digestion and in the host defense mechanisms against invading microbes. In Ostrea edulis (Native oyster), this protein is Lysozyme (lysoz).